Reading from the N-terminus, the 85-residue chain is Dual endothelin-1/VEGF signal peptide receptor (85 aa).

Topologically, residues 1 to 18 are extracellular; the sequence is MTMFKGSNEMKSRWNWGS. A helical membrane pass occupies residues 19-37; sequence ITCIICFTCVGSQLSMSSS. Over 38–85 the chain is Cytoplasmic; sequence KASNFSGPLQLYQRELEIFIVLTDVPNYRLIKENSHLHTTIVDQGRTV.

In terms of processing, N-glycosylated. Expressed in kidney. Expressed in endothelial cells.

It localises to the cell membrane. Functionally, dual receptor for both endothelin-1 and the signal sequence of vascular endothelial growth factor A. Does not act as a receptor for angiotensin-2. Does not bind the VEGFA mature protein. May play a role in angiogenesis with a significant role in cardiovascular and neural development. This chain is Dual endothelin-1/VEGF signal peptide receptor, found in Homo sapiens (Human).